The primary structure comprises 58 residues: Large ribosomal subunit protein bL32 (58 aa).

The protein belongs to the bacterial ribosomal protein bL32 family.

The chain is Large ribosomal subunit protein bL32 from Limosilactobacillus fermentum (strain NBRC 3956 / LMG 18251) (Lactobacillus fermentum).